Here is a 122-residue protein sequence, read N- to C-terminus: MIQPQTYLNVADNSGARKLMCIRIVGASNRRYAHIGDVIVAVIKEAVPNMPLERSEVIRAVIVRTCKELNRGNGMIIRYDDNAAVVIDQEGNPKGTRVFGAIARELRQLNFTKIVSLAPEVL.

The protein belongs to the universal ribosomal protein uL14 family. As to quaternary structure, part of the 50S ribosomal subunit.

The protein localises to the plastid. The protein resides in the chloroplast. In terms of biological role, binds to 23S rRNA. The polypeptide is Large ribosomal subunit protein uL14c (Buxus microphylla (Littleleaf boxwood)).